We begin with the raw amino-acid sequence, 145 residues long: Large ribosomal subunit protein uL14m (145 aa).

The transit peptide at 1–30 (MAFFTGLWGPFTCVSRVLSHHCFSTTGSLS) directs the protein to the mitochondrion.

The protein belongs to the universal ribosomal protein uL14 family. As to quaternary structure, component of the mitochondrial large ribosomal subunit (mt-LSU). Mature mammalian 55S mitochondrial ribosomes consist of a small (28S) and a large (39S) subunit. The 28S small subunit contains a 12S ribosomal RNA (12S mt-rRNA) and 30 different proteins. The 39S large subunit contains a 16S rRNA (16S mt-rRNA), a copy of mitochondrial valine transfer RNA (mt-tRNA(Val)), which plays an integral structural role, and 52 different proteins. Interacts with MALSU1.

It localises to the mitochondrion. In terms of biological role, forms part of 2 intersubunit bridges in the assembled ribosome. Upon binding to MALSU1 intersubunit bridge formation is blocked, preventing ribosome formation and repressing translation. The protein is Large ribosomal subunit protein uL14m (MRPL14) of Homo sapiens (Human).